Reading from the N-terminus, the 547-residue chain is Smu-2 suppressor of mec-8 and unc-52 protein (547 aa).

Disordered regions lie at residues 18–125, 164–202, 288–459, 496–515, and 524–547; these read TSAR…AQDQ, IDKS…AQEL, AEPK…AGPK, NGEG…AKRL, and KIMD…KPKY. A compositionally biased stretch (basic and acidic residues) spans 34-44; that stretch reads ADPKTGDDKPA. A compositionally biased stretch (basic residues) spans 45–58; it reads SFKHKHLKPAKFKK. Residues 66–94 are a coiled coil; it reads KAKKEKTEADEDEAALKNILKNYRDRAAE. Residues 87–106 show a composition bias toward basic and acidic residues; that stretch reads NYRDRAAERRKQGDEKEDPS. Residues 163–223 are required and sufficient for interaction with smu-1; sequence EIDKSDDDDD…SLHRVLFKNE (61 aa). Residues 166–178 show a composition bias toward acidic residues; the sequence is KSDDDDDDDIDTA. Low complexity-rich tracts occupy residues 185-196 and 307-317; these read SSSSSSKPSEAS and APGAAAAAPGA. Positions 330–423 are enriched in basic and acidic residues; the sequence is VPSRKSRDSR…EREKKRKELE (94 aa). Tandem repeats lie at residues 336–337, 339–340, 348–349, 350–351, 352–353, 354–355, 356–357, 358–359, 360–361, 362–363, 364–365, and 367–368. Positions 336-368 are 12 X 2 AA repeats of R-[DS]; that stretch reads RDSRDAGRRGSRRDRSRDRSRDRDRDRDRDNRD. The stretch at 371 to 427 forms a coiled coil; it reads FEKSANSRREEEQNRREQQRERERAEQERRREREKEREQEKAKEREKKRKELEESSG.

It belongs to the RED family. As to quaternary structure, probable component of the spliceosome. Heterotetramer with smu-1. The smu-1 homodimer interacts (via the N-terminal region including the LisH and CTLH domains) with smu-2, giving rise to a heterotetramer. As to expression, ubiquitous.

The protein localises to the nucleus. Functionally, auxiliary spliceosomal protein that regulates selection of alternative splice sites in a small set of target pre-mRNA species. Selectively regulates alternative splicing of unc-52 exon 17. Thus, smu-2 mutants selectively suppress the effects of unc-52 nonsense mutations in exon 17 by promoting the accumulation of unc-52 isoforms that lack exon 17. In contrast, smu-2 mutants do not suppress the effects of an unc-52 mutation that affects the 5' splice site of exon 16. Required for normal accumulation of smu-1. The sequence is that of Smu-2 suppressor of mec-8 and unc-52 protein from Caenorhabditis elegans.